The sequence spans 490 residues: Cysteine--tRNA ligase (490 aa).

C36 contributes to the Zn(2+) binding site. The 'HIGH' region motif lies at 38–48; the sequence is VTVYDYSHIGH. 3 residues coordinate Zn(2+): C216, H241, and E245. The short motif at 278–282 is the 'KMSKS' region element; the sequence is KMSKS. ATP is bound at residue K281.

The protein belongs to the class-I aminoacyl-tRNA synthetase family. Monomer. The cofactor is Zn(2+).

It localises to the cytoplasm. The catalysed reaction is tRNA(Cys) + L-cysteine + ATP = L-cysteinyl-tRNA(Cys) + AMP + diphosphate. This chain is Cysteine--tRNA ligase, found in Magnetococcus marinus (strain ATCC BAA-1437 / JCM 17883 / MC-1).